A 692-amino-acid polypeptide reads, in one-letter code: DNA-binding protein RFX2 (692 aa).

Residues 1–26 form a disordered region; the sequence is MQNSEGGADSPATVALRPAAQPVPAS. Residue Ser26 is modified to Phosphoserine. The RFX-type winged-helix DNA-binding region spans 169–244; sequence TLQWLLDNYE…YHYYGIRLKP (76 aa). The interval 261 to 296 is disordered; it reads RQQPTHQKPRYRPAQKSDSLGDGSAHSNMHSTPEQA. Positions 285-294 are enriched in polar residues; sequence AHSNMHSTPE. The residue at position 386 (Ser386) is a Phosphoserine. Over residues 660–685 the composition is skewed to basic and acidic residues; the sequence is DGHSSEADVDGRSLGEPLVKRERSDP. Positions 660-692 are disordered; that stretch reads DGHSSEADVDGRSLGEPLVKRERSDPSHPLQGI.

The protein belongs to the RFX family. As to quaternary structure, homodimer; probably only forms homodimers in testis. Heterodimer; heterodimerizes with RFX1 and RFX3. Expressed at highest level in testis. Expressed at lower level in thymus. Also expressed in stomach, kidney, liver, brain and heart. Weakly expressed in spleen and lung. Within testis, most abundantly present in spermatocytes: present from pachytene spermatocytes to early spermatids (at protein level). Also present in non-germinal tissues.

It is found in the nucleus. Its subcellular location is the cytoplasm. Functionally, transcription factor that acts as a key regulator of spermatogenesis. Acts by regulating expression of genes required for the haploid phase during spermiogenesis, such as genes required for cilium assembly and function. Recognizes and binds the X-box, a regulatory motif with DNA sequence 5'-GTNRCC(0-3N)RGYAAC-3' present on promoters. Probably activates transcription of the testis-specific histone gene H1-6. This Rattus norvegicus (Rat) protein is DNA-binding protein RFX2 (Rfx2).